The following is a 98-amino-acid chain: Acylphosphatase (98 aa).

In terms of domain architecture, Acylphosphatase-like spans 12–98 (TYYVRVRGVV…DKRFERFQQH (87 aa)). Active-site residues include Arg-27 and Asn-45.

The protein belongs to the acylphosphatase family.

The catalysed reaction is an acyl phosphate + H2O = a carboxylate + phosphate + H(+). The polypeptide is Acylphosphatase (acyP) (Burkholderia mallei (strain NCTC 10247)).